Consider the following 203-residue polypeptide: MRYPWFRLAIFVLGCLFPLWWFYEAAMGLLGPDPGKIMMDRLGLGALVFLLITLSMTPLQRLTGWSGWIVVRRQLGLWCFAYIVLHLVSYLVFILGLDWGQFGVELRKRPYIIVGALGFLGLLALAVTSNRYSQRRLGARWKKLHRLVYVILGLGLLHFLWIVRSDLKEWAIYAGIGGVLLVMRIPPVWRRVPRLMGGRGRAA.

Transmembrane regions (helical) follow at residues 10 to 30, 37 to 57, 75 to 95, 110 to 130, 147 to 167, and 169 to 189; these read IFVL…MGLL, IMMD…LSMT, LGLW…VFIL, PYII…VTSN, LVYV…RSDL, and EWAI…PPVW.

Belongs to the MsrQ family. As to quaternary structure, heterodimer of a catalytic subunit (MsrP) and a heme-binding subunit (MsrQ). FMN is required as a cofactor. The cofactor is heme b.

It is found in the cell inner membrane. In terms of biological role, part of the MsrPQ system that repairs oxidized periplasmic proteins containing methionine sulfoxide residues (Met-O), using respiratory chain electrons. Thus protects these proteins from oxidative-stress damage caused by reactive species of oxygen and chlorine generated by the host defense mechanisms. MsrPQ is essential for the maintenance of envelope integrity under bleach stress, rescuing a wide series of structurally unrelated periplasmic proteins from methionine oxidation. MsrQ provides electrons for reduction to the reductase catalytic subunit MsrP, using the quinone pool of the respiratory chain. The sequence is that of Protein-methionine-sulfoxide reductase heme-binding subunit MsrQ from Pseudomonas entomophila (strain L48).